The following is a 134-amino-acid chain: Phosphoribosyl-AMP cyclohydrolase (134 aa).

Asp80 lines the Mg(2+) pocket. Zn(2+) is bound at residue Cys81. The Mg(2+) site is built by Asp82 and Asp84. 2 residues coordinate Zn(2+): Cys98 and Cys105.

It belongs to the PRA-CH family. In terms of assembly, homodimer. Requires Mg(2+) as cofactor. Zn(2+) is required as a cofactor.

It is found in the cytoplasm. It catalyses the reaction 1-(5-phospho-beta-D-ribosyl)-5'-AMP + H2O = 1-(5-phospho-beta-D-ribosyl)-5-[(5-phospho-beta-D-ribosylamino)methylideneamino]imidazole-4-carboxamide. It functions in the pathway amino-acid biosynthesis; L-histidine biosynthesis; L-histidine from 5-phospho-alpha-D-ribose 1-diphosphate: step 3/9. Its function is as follows. Catalyzes the hydrolysis of the adenine ring of phosphoribosyl-AMP. This is Phosphoribosyl-AMP cyclohydrolase from Herminiimonas arsenicoxydans.